Reading from the N-terminus, the 307-residue chain is Pantothenate kinase (307 aa).

An ATP-binding site is contributed by Gly-90 to Ser-97.

Belongs to the prokaryotic pantothenate kinase family.

The protein localises to the cytoplasm. It catalyses the reaction (R)-pantothenate + ATP = (R)-4'-phosphopantothenate + ADP + H(+). Its pathway is cofactor biosynthesis; coenzyme A biosynthesis; CoA from (R)-pantothenate: step 1/5. The sequence is that of Pantothenate kinase from Enterococcus faecalis (strain ATCC 700802 / V583).